The chain runs to 450 residues: Na(+)/H(+) antiporter NhaA 1 (450 aa).

A run of 11 helical transmembrane segments spans residues 35-55 (SSLF…SDYA), 79-99 (LKHI…GLEI), 117-137 (LIIC…GFNW), 143-163 (IGWG…LTMV), 173-193 (AFIV…IAIF), 198-218 (ISLM…VANY), 224-244 (PLFY…SGVH), 320-340 (LPVV…VVIN), 356-376 (IISG…WFAL), 392-412 (VIGA…IATL), and 423-443 (VAKT…LLYL).

It belongs to the NhaA Na(+)/H(+) (TC 2.A.33) antiporter family.

The protein resides in the cell inner membrane. It catalyses the reaction Na(+)(in) + 2 H(+)(out) = Na(+)(out) + 2 H(+)(in). Its function is as follows. Na(+)/H(+) antiporter that extrudes sodium in exchange for external protons. In Shewanella denitrificans (strain OS217 / ATCC BAA-1090 / DSM 15013), this protein is Na(+)/H(+) antiporter NhaA 1.